The chain runs to 233 residues: Putative N-acetylmannosamine-6-phosphate 2-epimerase (233 aa).

It belongs to the NanE family.

It carries out the reaction an N-acyl-D-glucosamine 6-phosphate = an N-acyl-D-mannosamine 6-phosphate. It functions in the pathway amino-sugar metabolism; N-acetylneuraminate degradation; D-fructose 6-phosphate from N-acetylneuraminate: step 3/5. Functionally, converts N-acetylmannosamine-6-phosphate (ManNAc-6-P) to N-acetylglucosamine-6-phosphate (GlcNAc-6-P). In Yersinia pseudotuberculosis serotype O:3 (strain YPIII), this protein is Putative N-acetylmannosamine-6-phosphate 2-epimerase.